Reading from the N-terminus, the 289-residue chain is Bis(5'-nucleosyl)-tetraphosphatase, symmetrical (289 aa).

This sequence belongs to the Ap4A hydrolase family.

It carries out the reaction P(1),P(4)-bis(5'-adenosyl) tetraphosphate + H2O = 2 ADP + 2 H(+). Functionally, hydrolyzes diadenosine 5',5'''-P1,P4-tetraphosphate to yield ADP. This chain is Bis(5'-nucleosyl)-tetraphosphatase, symmetrical, found in Yersinia pseudotuberculosis serotype O:1b (strain IP 31758).